The primary structure comprises 388 residues: S-adenosylmethionine synthase (388 aa).

His14 is a binding site for ATP. Asp16 contributes to the Mg(2+) binding site. Glu42 serves as a coordination point for K(+). Residues Glu55 and Gln98 each coordinate L-methionine. Residues 98-108 form a flexible loop region; that stretch reads QSAEISSAVDQ. ATP is bound by residues 166-168, Asp242, 248-249, Ala265, and Lys269; these read DGK and RK. Asp242 contributes to the L-methionine binding site. Lys273 contributes to the L-methionine binding site.

The protein belongs to the AdoMet synthase family. As to quaternary structure, homotetramer; dimer of dimers. Mg(2+) serves as cofactor. Requires K(+) as cofactor.

It is found in the cytoplasm. It catalyses the reaction L-methionine + ATP + H2O = S-adenosyl-L-methionine + phosphate + diphosphate. It functions in the pathway amino-acid biosynthesis; S-adenosyl-L-methionine biosynthesis; S-adenosyl-L-methionine from L-methionine: step 1/1. Catalyzes the formation of S-adenosylmethionine (AdoMet) from methionine and ATP. The overall synthetic reaction is composed of two sequential steps, AdoMet formation and the subsequent tripolyphosphate hydrolysis which occurs prior to release of AdoMet from the enzyme. The polypeptide is S-adenosylmethionine synthase (Oenococcus oeni (strain ATCC BAA-331 / PSU-1)).